The sequence spans 196 residues: Venom platylysin (196 aa).

Belongs to the redulysin-like family. As to expression, expressed by the venom gland.

It localises to the secreted. In terms of biological role, probable insecticidal toxin that has been detected in a semi-pure insecticidal fraction. In Platymeris biguttatus (Two-spotted assassin bug), this protein is Venom platylysin.